A 729-amino-acid polypeptide reads, in one-letter code: Polyribonucleotide nucleotidyltransferase (729 aa).

The Mg(2+) site is built by aspartate 510 and aspartate 516. The region spanning 576 to 635 (PRVISVKIPVDKIGEVIGPKGKMINQIQADSGAEITVEDDGTIYIGAADGTSAETARSAI) is the KH domain. The region spanning 647–719 (GERYLGTIVK…ARGKISLSPS (73 aa)) is the S1 motif domain.

Belongs to the polyribonucleotide nucleotidyltransferase family. Requires Mg(2+) as cofactor.

It is found in the cytoplasm. The enzyme catalyses RNA(n+1) + phosphate = RNA(n) + a ribonucleoside 5'-diphosphate. Its function is as follows. Involved in mRNA degradation. Catalyzes the phosphorolysis of single-stranded polyribonucleotides processively in the 3'- to 5'-direction. This Frankia alni (strain DSM 45986 / CECT 9034 / ACN14a) protein is Polyribonucleotide nucleotidyltransferase.